Here is a 270-residue protein sequence, read N- to C-terminus: uncharacterized protein (270 aa).

It localises to the virion. This is an uncharacterized protein from Acanthamoeba polyphaga (Amoeba).